Consider the following 667-residue polypeptide: Mediator of RNA polymerase II transcription subunit 17 (667 aa).

Residues 172 to 197 are a coiled coil; that stretch reads KRRALQEAVQVLDMAQKQRQRASSNL.

It belongs to the Mediator complex subunit 17 family. Component of the Mediator complex.

It localises to the nucleus. Component of the Mediator complex, a coactivator involved in regulated gene transcription of nearly all RNA polymerase II-dependent genes. Mediator functions as a bridge to convey information from gene-specific regulatory proteins to the basal RNA polymerase II transcription machinery. Mediator is recruited to promoters by direct interactions with regulatory proteins and serves as a scaffold for the assembly of a functional preinitiation complex with RNA polymerase II and the general transcription factors. The chain is Mediator of RNA polymerase II transcription subunit 17 (mdt-17) from Caenorhabditis elegans.